The following is a 669-amino-acid chain: Exostosin-like 1 (669 aa).

Residues 1 to 8 (MLWRRKSF) lie on the Cytoplasmic side of the membrane. A helical; Signal-anchor for type II membrane protein membrane pass occupies residues 9-29 (WLALSAFWLLLVLLGVFPLRL). Residues 30-669 (AVLPGPLPGR…RKKYRSLEKP (640 aa)) are Lumenal-facing. N-linked (GlcNAc...) asparagine glycans are attached at residues Asn263 and Asn480. Cys577 and Cys627 are joined by a disulfide. The segment at 601-621 (RQHPEAVPMDSGDPRPVPEPQ) is disordered.

The protein belongs to the glycosyltransferase 47 family.

Its subcellular location is the endoplasmic reticulum membrane. The catalysed reaction is 3-O-{[(1-&gt;4)-beta-D-GlcA-(1-&gt;4)-alpha-D-GlcNAc](n)-(1-&gt;4)-beta-D-GlcA-(1-&gt;3)-beta-D-Gal-(1-&gt;3)-beta-D-Gal-(1-&gt;4)-beta-D-Xyl}-L-seryl-[protein] + UDP-N-acetyl-alpha-D-glucosamine = 3-O-{alpha-D-GlcNAc-[(1-&gt;4)-beta-D-GlcA-(1-&gt;4)-alpha-D-GlcNAc](n)-(1-&gt;4)-beta-D-GlcA-(1-&gt;3)-beta-D-Gal-(1-&gt;3)-beta-D-Gal-(1-&gt;4)-beta-D-Xyl}-L-seryl-[protein] + UDP + H(+). It participates in protein modification; protein glycosylation. In terms of biological role, glycosyltransferase required for the biosynthesis of heparan-sulfate (HS). Transfers N-acetyl-alpha-D-glucosamine to the nascent HS chain (GlcNAcT-II activity). Appears to lack GlcNAcT I and GlcAT-II activities. This chain is Exostosin-like 1 (Extl1), found in Mus musculus (Mouse).